The following is a 477-amino-acid chain: Chaperonin GroEL 2 (477 aa).

ATP is bound by residues 29 to 32, 86 to 90, and G416; these read TLGP and DGTTT.

The protein belongs to the chaperonin (HSP60) family. Forms a cylinder of 14 subunits composed of two heptameric rings stacked back-to-back. Interacts with the co-chaperonin GroES.

The protein localises to the cytoplasm. The catalysed reaction is ATP + H2O + a folded polypeptide = ADP + phosphate + an unfolded polypeptide.. Its function is as follows. Together with its co-chaperonin GroES, plays an essential role in assisting protein folding. The GroEL-GroES system forms a nano-cage that allows encapsulation of the non-native substrate proteins and provides a physical environment optimized to promote and accelerate protein folding. The sequence is that of Chaperonin GroEL 2 from Streptomyces lividans.